We begin with the raw amino-acid sequence, 158 residues long: Acetolactate synthase small subunit (158 aa).

Positions 4-79 (MIIAKLHNVT…DVIEVADITD (76 aa)) constitute an ACT domain.

Belongs to the acetolactate synthase small subunit family. As to quaternary structure, dimer of large and small chains.

The enzyme catalyses 2 pyruvate + H(+) = (2S)-2-acetolactate + CO2. It participates in amino-acid biosynthesis; L-isoleucine biosynthesis; L-isoleucine from 2-oxobutanoate: step 1/4. Its pathway is amino-acid biosynthesis; L-valine biosynthesis; L-valine from pyruvate: step 1/4. This is Acetolactate synthase small subunit (ilvH) from Lactococcus lactis subsp. lactis (strain IL1403) (Streptococcus lactis).